The chain runs to 176 residues: Large ribosomal subunit protein uL6 (176 aa).

This sequence belongs to the universal ribosomal protein uL6 family. As to quaternary structure, part of the 50S ribosomal subunit.

This protein binds to the 23S rRNA, and is important in its secondary structure. It is located near the subunit interface in the base of the L7/L12 stalk, and near the tRNA binding site of the peptidyltransferase center. This Lactobacillus acidophilus (strain ATCC 700396 / NCK56 / N2 / NCFM) protein is Large ribosomal subunit protein uL6.